We begin with the raw amino-acid sequence, 330 residues long: MADTSPRTDVSTDDDTDHPDLGSEGALVNTAASDSSDRSKGKMDQKTLRRLAQNREAARKSRLRKKAYVQQLENSRLKLTQLEQELQRARQQGVFISGTGDQAHSTGGNGALAFDAEHSRWLEEKNKQMNELRSALNAHAGDSELRIIVDGVMAHYEELFRIKSNAAKNDVFHLLSGMWKTPAERCFLWLGGFRSSELLKLLANQLEPMTERQLMGINNLQQTSQQAEDALSQGMESLQQSLADTLSSGTLGSSSSGNVASYMGQMAMAMGKLGTLEGFIRQADNLRLQTLQQMIRVLTTRQSARALLAIHDYFSRLRALSSLWLARPRE.

The interval 1 to 48 is disordered; that stretch reads MADTSPRTDVSTDDDTDHPDLGSEGALVNTAASDSSDRSKGKMDQKTL. Positions 35–47 are enriched in basic and acidic residues; that stretch reads SSDRSKGKMDQKT. A bZIP domain is found at 44–107; the sequence is DQKTLRRLAQ…GTGDQAHSTG (64 aa). Coiled-coil stretches lie at residues 45–142 and 217–244; these read QKTL…HAGD and INNL…SLAD. A basic motif region spans residues 46–66; it reads KTLRRLAQNREAARKSRLRKK. Residues 72 to 86 are leucine-zipper; it reads LENSRLKLTQLEQEL. The DOG1 domain occupies 111–327; sequence ALAFDAEHSR…RALSSLWLAR (217 aa).

This sequence belongs to the bZIP family. Binds DNA as a dimer. Interacts with NPR1, NPR3 and NPR4. Interacts with GRXC7/ROXY1 and GRXC9/GRX480. As to expression, expressed in the whole plant.

The protein localises to the nucleus. In terms of biological role, transcriptional activator that binds specifically to the DNA sequence 5'-TGACG-3'. Recognizes ocs elements like the as-1 motif of the cauliflower mosaic virus 35S promoter. Binding to the as-1-like cis elements mediate auxin- and salicylic acid-inducible transcription. Required to induce the systemic acquired resistance (SAR) via the regulation of pathogenesis-related genes expression. Binding to the as-1 element of PR-1 promoter is salicylic acid-inducible and mediated by NPR1. Could also bind to the C-boxes (5'-ATGACGTCAT-3') with high affinity. In Arabidopsis thaliana (Mouse-ear cress), this protein is Transcription factor TGA2 (TGA2).